The following is a 318-amino-acid chain: Acetyl-coenzyme A carboxylase carboxyl transferase subunit alpha (318 aa).

The CoA carboxyltransferase C-terminal domain occupies Arg-39–Lys-297.

Belongs to the AccA family. In terms of assembly, acetyl-CoA carboxylase is a heterohexamer composed of biotin carboxyl carrier protein (AccB), biotin carboxylase (AccC) and two subunits each of ACCase subunit alpha (AccA) and ACCase subunit beta (AccD).

It localises to the cytoplasm. The enzyme catalyses N(6)-carboxybiotinyl-L-lysyl-[protein] + acetyl-CoA = N(6)-biotinyl-L-lysyl-[protein] + malonyl-CoA. Its pathway is lipid metabolism; malonyl-CoA biosynthesis; malonyl-CoA from acetyl-CoA: step 1/1. Its function is as follows. Component of the acetyl coenzyme A carboxylase (ACC) complex. First, biotin carboxylase catalyzes the carboxylation of biotin on its carrier protein (BCCP) and then the CO(2) group is transferred by the carboxyltransferase to acetyl-CoA to form malonyl-CoA. The polypeptide is Acetyl-coenzyme A carboxylase carboxyl transferase subunit alpha (Bartonella tribocorum (strain CIP 105476 / IBS 506)).